A 101-amino-acid polypeptide reads, in one-letter code: MEKFKRPFRKSKRSFRRRLPPIGLGDRIDYRNMSLISRFISEQGKILPRRVNRLTLKQQRLITIAIKQARILSLLPFLNNEKQFERAESISRTTGTRTRKK.

The protein belongs to the bacterial ribosomal protein bS18 family. Part of the 30S ribosomal subunit.

It is found in the plastid. The protein localises to the chloroplast. This is Small ribosomal subunit protein bS18c from Nymphaea alba (White water-lily).